We begin with the raw amino-acid sequence, 243 residues long: Pyridoxine 5'-phosphate synthase (243 aa).

Asparagine 9 is a 3-amino-2-oxopropyl phosphate binding site. 11–12 (DH) serves as a coordination point for 1-deoxy-D-xylulose 5-phosphate. Arginine 20 is a 3-amino-2-oxopropyl phosphate binding site. Histidine 45 functions as the Proton acceptor in the catalytic mechanism. 1-deoxy-D-xylulose 5-phosphate-binding residues include arginine 47 and histidine 52. Catalysis depends on glutamate 72, which acts as the Proton acceptor. A 1-deoxy-D-xylulose 5-phosphate-binding site is contributed by threonine 102. Histidine 193 (proton donor) is an active-site residue. 3-amino-2-oxopropyl phosphate is bound by residues glycine 194 and 215–216 (GH).

This sequence belongs to the PNP synthase family. As to quaternary structure, homooctamer; tetramer of dimers.

The protein resides in the cytoplasm. The enzyme catalyses 3-amino-2-oxopropyl phosphate + 1-deoxy-D-xylulose 5-phosphate = pyridoxine 5'-phosphate + phosphate + 2 H2O + H(+). The protein operates within cofactor biosynthesis; pyridoxine 5'-phosphate biosynthesis; pyridoxine 5'-phosphate from D-erythrose 4-phosphate: step 5/5. Catalyzes the complicated ring closure reaction between the two acyclic compounds 1-deoxy-D-xylulose-5-phosphate (DXP) and 3-amino-2-oxopropyl phosphate (1-amino-acetone-3-phosphate or AAP) to form pyridoxine 5'-phosphate (PNP) and inorganic phosphate. The protein is Pyridoxine 5'-phosphate synthase of Vibrio vulnificus (strain CMCP6).